Here is a 699-residue protein sequence, read N- to C-terminus: Kinesin-like protein KIF3A (699 aa).

The Kinesin motor domain occupies 14–345; the sequence is NVKVVVRCRP…LRYANRAKNI (332 aa). ATP is bound at residue 100–107; the sequence is GQTGTGKT. The stretch at 355 to 590 forms a coiled coil; that stretch reads PKDALLRQFQ…LSRELRLQML (236 aa). Disordered stretches follow at residues 372 to 421 and 663 to 699; these read KKLE…KMIE and SLMK…SLLQ. Residues 376 to 400 are compositionally biased toward acidic residues; it reads EGEEISGSDISGSEEDDDEEGEVGE. Positions 672–687 are enriched in basic residues; the sequence is TSKGKARPKTGRRKRS. Ser-687 carries the post-translational modification Phosphoserine. The interval 697 to 699 is globular; sequence LLQ.

It belongs to the TRAFAC class myosin-kinesin ATPase superfamily. Kinesin family. Kinesin II subfamily. In terms of assembly, heterodimer of KIF3A and KIF3B. Interacts with CIMAP3. Interacts with CLN3. Interacts with DCTN1. Interacts with FLCN. Interacts with AP3B1.

Its subcellular location is the cytoplasm. The protein resides in the cytoskeleton. It is found in the cell projection. It localises to the cilium. The protein localises to the microtubule organizing center. Its subcellular location is the centrosome. The protein resides in the centriole. Microtubule-based anterograde translocator for membranous organelles. Plus end-directed microtubule sliding activity in vitro. Plays a role in primary cilia formation. Plays a role in centriole cohesion and subdistal appendage organization and function. Regulates the formation of the subdistal appendage via recruitment of DCTN1 to the centriole. Also required for ciliary basal feet formation and microtubule anchoring to mother centriole. The sequence is that of Kinesin-like protein KIF3A (KIF3A) from Homo sapiens (Human).